Consider the following 460-residue polypeptide: Phosphoglucosamine mutase (460 aa).

Serine 102 serves as the catalytic Phosphoserine intermediate. Positions 102, 241, 243, and 245 each coordinate Mg(2+). Phosphoserine is present on serine 102.

It belongs to the phosphohexose mutase family. It depends on Mg(2+) as a cofactor. In terms of processing, activated by phosphorylation.

It catalyses the reaction alpha-D-glucosamine 1-phosphate = D-glucosamine 6-phosphate. In terms of biological role, catalyzes the conversion of glucosamine-6-phosphate to glucosamine-1-phosphate. This Verminephrobacter eiseniae (strain EF01-2) protein is Phosphoglucosamine mutase.